The primary structure comprises 273 residues: Eukaryotic translation initiation factor 3 subunit G-2 (273 aa).

The segment at 165–193 (KYVPPFMKDGGGGPGGKNWGRGRERDDSS) is disordered. Over residues 173–183 (DGGGGPGGKNW) the composition is skewed to gly residues. An RRM domain is found at 193-271 (SAVRISNLSE…LILCVEWSKP (79 aa)).

The protein belongs to the eIF-3 subunit G family. Component of the eukaryotic translation initiation factor 3 (eIF-3) complex. The eIF-3 complex interacts with pix.

It localises to the cytoplasm. In terms of biological role, RNA-binding component of the eukaryotic translation initiation factor 3 (eIF-3) complex, which is involved in protein synthesis of a specialized repertoire of mRNAs and, together with other initiation factors, stimulates binding of mRNA and methionyl-tRNAi to the 40S ribosome. The eIF-3 complex specifically targets and initiates translation of a subset of mRNAs involved in cell proliferation. This subunit can bind 18S rRNA. The chain is Eukaryotic translation initiation factor 3 subunit G-2 from Drosophila yakuba (Fruit fly).